Here is a 205-residue protein sequence, read N- to C-terminus: Thymidylate kinase (205 aa).

9–16 is an ATP binding site; sequence GPEGSGKT.

The protein belongs to the thymidylate kinase family.

It catalyses the reaction dTMP + ATP = dTDP + ADP. In terms of biological role, phosphorylation of dTMP to form dTDP in both de novo and salvage pathways of dTTP synthesis. The protein is Thymidylate kinase of Staphylococcus aureus (strain MSSA476).